A 215-amino-acid polypeptide reads, in one-letter code: Ependymin-1 (215 aa).

An N-terminal signal peptide occupies residues 1–20 (MHTVKLLCVVFSCLCAVAWA). N-linked (GlcNAc...) asparagine glycans are attached at residues asparagine 71 and asparagine 94.

Belongs to the ependymin family. As to quaternary structure, forms disulfide-linked dimers. Post-translationally, different glycosylation variants are known as EPD-beta and EPD-gamma. Binds calcium through the terminal sialic acids. EPDs are synthesized in the meninx and secreted in the cerebrospinal fluid.

Its subcellular location is the secreted. Its function is as follows. May play a role in neural plasticity. May be involved during axon regeneration. This chain is Ependymin-1 (epd1), found in Carassius auratus (Goldfish).